A 198-amino-acid chain; its full sequence is Dephospho-CoA kinase (198 aa).

A DPCK domain is found at 3–198 (IVGITGGIGS…LLAKERLELA (196 aa)). An ATP-binding site is contributed by 11-16 (GSGKTT).

This sequence belongs to the CoaE family.

It is found in the cytoplasm. The catalysed reaction is 3'-dephospho-CoA + ATP = ADP + CoA + H(+). It functions in the pathway cofactor biosynthesis; coenzyme A biosynthesis; CoA from (R)-pantothenate: step 5/5. Functionally, catalyzes the phosphorylation of the 3'-hydroxyl group of dephosphocoenzyme A to form coenzyme A. The protein is Dephospho-CoA kinase of Dehalococcoides mccartyi (strain ATCC BAA-2266 / KCTC 15142 / 195) (Dehalococcoides ethenogenes (strain 195)).